The sequence spans 304 residues: MPIKIPIELPAFQVLSDENIFVMNNERANTQDIRPLKIAILNLMPKKIVTENQLLRYLSNTPLQVEVSLIQTKSYTSHNTPPEHLNKFYSYFDDIKQEKFDGLIITGAPVEQMAFEEVTYWKELTEIMEWSKTHVFSTFYICWGAQAGLYYHYDIPKYDLDEKMFGVFSHWVNDEKADLTRGLDDVFYAPHSRHTEVKREDIEKVSNLEILSESEEAGVFIVATKDRRNVFVTGHMEYDRNTLMDEYIRDKEKGDEIALPKNYFRNDDINQKPLYTWRGPASIVFGNWLNYCVYQNTPFDLNTL.

Cysteine 142 (acyl-thioester intermediate) is an active-site residue. 2 residues coordinate substrate: lysine 163 and serine 192. The Proton acceptor role is filled by histidine 235. Glutamate 237 is an active-site residue. Arginine 249 lines the substrate pocket.

Belongs to the MetA family.

It localises to the cytoplasm. It carries out the reaction L-homoserine + acetyl-CoA = O-acetyl-L-homoserine + CoA. Its pathway is amino-acid biosynthesis; L-methionine biosynthesis via de novo pathway; O-acetyl-L-homoserine from L-homoserine: step 1/1. In terms of biological role, transfers an acetyl group from acetyl-CoA to L-homoserine, forming acetyl-L-homoserine. The sequence is that of Homoserine O-acetyltransferase from Clostridium beijerinckii (strain ATCC 51743 / NCIMB 8052) (Clostridium acetobutylicum).